The sequence spans 420 residues: DNA primase small subunit (420 aa).

N-acetylmethionine is present on Met1. Catalysis depends on residues Glu44, Asp109, and Asp111. Residues Asp109 and Asp111 each coordinate Mg(2+). Asp109 and Asp111 together coordinate Mn(2+). A ribonucleoside 5'-triphosphate is bound at residue 109-111 (DID). The Zn(2+) site is built by Cys121, Cys122, Cys128, and Cys131. The Zinc knuckle motif motif lies at 121-131 (CCSSADICPKC). 160 to 166 (SGRRGVH) is a binding site for a ribonucleoside 5'-triphosphate. Asp306 provides a ligand contact to Mg(2+). Asp306 is a binding site for Mn(2+). A ribonucleoside 5'-triphosphate-binding positions include 315–318 (HLLK) and His324. The segment covering 363–373 (NEEEKEENEAE) has biased composition (acidic residues). The interval 363 to 382 (NEEEKEENEAESDVKHRTRD) is disordered.

The protein belongs to the eukaryotic-type primase small subunit family. As to quaternary structure, heterodimer of a catalytic subunit PRIM1 and a regulatory subunit PRIM2, also known as the DNA primase complex. Interacts with PRIM2 (via C-terminus). Component of the alpha DNA polymerase complex (also known as the alpha DNA polymerase-primase complex) consisting of four subunits: the catalytic subunit POLA1, the regulatory subunit POLA2, and the primase complex subunits PRIM1 and PRIM2 respectively. Within the complex, POLA1 directly interacts with PRIM2. The cofactor is Mg(2+). Mn(2+) serves as cofactor.

It carries out the reaction ssDNA + n NTP = ssDNA/pppN(pN)n-1 hybrid + (n-1) diphosphate.. The presence of the regulatory subunit PRIM2/p58 accelerates the kinetics of initiation and primer extension. Inhibited by arabinose nucleoside derivatives such as fludarabine and vidarabine. Its function is as follows. Catalytic subunit of the DNA primase complex and component of the DNA polymerase alpha complex (also known as the alpha DNA polymerase-primase complex - primosome/replisome) which play an essential role in the initiation of DNA synthesis. During the S phase of the cell cycle, the DNA polymerase alpha complex (composed of a catalytic subunit POLA1, an accessory subunit POLA2 and two primase subunits, the catalytic subunit PRIM1 and the regulatory subunit PRIM2) is recruited to DNA at the replicative forks via direct interactions with MCM10 and WDHD1. The primase subunit of the polymerase alpha complex initiates DNA synthesis by oligomerising short RNA primers on both leading and lagging strands. These primers are initially extended by the polymerase alpha catalytic subunit and subsequently transferred to polymerase delta and polymerase epsilon for processive synthesis on the lagging and leading strand, respectively. In the primase complex, both subunits are necessary for the initial di-nucleotide formation, but the extension of the primer depends only on the catalytic subunit. Synthesizes 9-mer RNA primers (also known as the 'unit length' RNA primers). Incorporates only ribonucleotides in the presence of ribo- and deoxy-nucleotide triphosphates (rNTPs, dNTPs). Requires template thymine or cytidine to start the RNA primer synthesis, with an adenine or guanine at its 5'-end. Binds single stranded DNA. The chain is DNA primase small subunit (PRIM1) from Homo sapiens (Human).